Here is a 343-residue protein sequence, read N- to C-terminus: KRR1 small subunit processome component homolog (343 aa).

Residues 126–194 (DIIKIGNLVH…VRDIVLETMN (69 aa)) form the KH domain. Basic residues predominate over residues 230-246 (KNKNISKRKQPKNKKPK). The interval 230–343 (KNKNISKRKQ…LMKANKKNRS (114 aa)) is disordered. Basic and acidic residues-rich tracts occupy residues 272 to 303 (LNKE…RNKD) and 318 to 331 (RPAE…DALK). Residues 272–341 (LNKEQKQAKK…AKLMKANKKN (70 aa)) adopt a coiled-coil conformation. The span at 333-343 (KLMKANKKNRS) shows a compositional bias: basic residues.

The protein belongs to the KRR1 family. As to quaternary structure, monomer. Component of the ribosomal small subunit (SSU) processome.

The protein resides in the nucleus. It localises to the nucleolus. In terms of biological role, required for 40S ribosome biogenesis. Involved in nucleolar processing of pre-18S ribosomal RNA and ribosome assembly. Binds to RNA. Required for female germline development, cell viability during eye development and for survival of dividing cells and epithelial cells during early wing disk development. The sequence is that of KRR1 small subunit processome component homolog from Drosophila virilis (Fruit fly).